The chain runs to 148 residues: Deoxyuridine 5'-triphosphate nucleotidohydrolase (148 aa).

Residues 65 to 67 (RSG), N78, 82 to 84 (TID), and K92 contribute to the substrate site.

The protein belongs to the dUTPase family. Mg(2+) is required as a cofactor.

It carries out the reaction dUTP + H2O = dUMP + diphosphate + H(+). Its pathway is pyrimidine metabolism; dUMP biosynthesis; dUMP from dCTP (dUTP route): step 2/2. This enzyme is involved in nucleotide metabolism: it produces dUMP, the immediate precursor of thymidine nucleotides and it decreases the intracellular concentration of dUTP so that uracil cannot be incorporated into DNA. This Chlorobium phaeovibrioides (strain DSM 265 / 1930) (Prosthecochloris vibrioformis (strain DSM 265)) protein is Deoxyuridine 5'-triphosphate nucleotidohydrolase.